We begin with the raw amino-acid sequence, 151 residues long: Deoxyuridine 5'-triphosphate nucleotidohydrolase (151 aa).

Mg(2+) is bound at residue arginine 28. Residues 72–74 (PRS), 86–89 (GVID), tyrosine 92, glycine 97, isoleucine 99, and arginine 115 contribute to the dUTP site.

This sequence belongs to the dUTPase family. The cofactor is Mg(2+).

It catalyses the reaction dUTP + H2O = dUMP + diphosphate + H(+). This enzyme is involved in nucleotide metabolism: it produces dUMP, the immediate precursor of thymidine nucleotides and it decreases the intracellular concentration of dUTP so that uracil cannot be incorporated into DNA. The chain is Deoxyuridine 5'-triphosphate nucleotidohydrolase (OPG046) from Monkeypox virus.